The following is a 132-amino-acid chain: Small ribosomal subunit protein uS12 (132 aa).

Residue Asp-89 is modified to 3-methylthioaspartic acid. The disordered stretch occupies residues 103-132 (DTSGVADRRQSRSKYGAKQPKEGGAAKGKK).

The protein belongs to the universal ribosomal protein uS12 family. In terms of assembly, part of the 30S ribosomal subunit. Contacts proteins S8 and S17. May interact with IF1 in the 30S initiation complex.

With S4 and S5 plays an important role in translational accuracy. In terms of biological role, interacts with and stabilizes bases of the 16S rRNA that are involved in tRNA selection in the A site and with the mRNA backbone. Located at the interface of the 30S and 50S subunits, it traverses the body of the 30S subunit contacting proteins on the other side and probably holding the rRNA structure together. The combined cluster of proteins S8, S12 and S17 appears to hold together the shoulder and platform of the 30S subunit. The polypeptide is Small ribosomal subunit protein uS12 (Chlorobium phaeovibrioides (strain DSM 265 / 1930) (Prosthecochloris vibrioformis (strain DSM 265))).